Here is a 939-residue protein sequence, read N- to C-terminus: U3 small nucleolar RNA-associated protein 21 (939 aa).

S2 bears the N-acetylserine mark. WD repeat units follow at residues 40 to 71 (ATGT…LLFV), 81 to 111 (VALS…HLLE), 119 to 158 (EHLC…TKLT), 168 to 201 (VSLQ…LVFT), 208 to 245 (QITT…RTIK), 252 to 287 (SSLS…IHVL), 295 to 347 (YGGV…RSRG), 354 to 388 (SYIA…QSQE), 415 to 454 (VALA…GRWT), 463 to 497 (VKSV…LRKK), 505 to 541 (VTGI…GKLK), 546 to 581 (ITAM…VRQL), 583 to 624 (GHSN…DGII), and 626 to 664 (DNVA…KTVS). S772 carries the phosphoserine modification.

In terms of assembly, interacts with snoRNA U3. Interacts with MPP10. Interacts (via WD repeats) with UTP18. Component of the ribosomal small subunit (SSU) processome composed of at least 40 protein subunits and snoRNA U3.

The protein resides in the nucleus. The protein localises to the nucleolus. In terms of biological role, involved in nucleolar processing of pre-18S ribosomal RNA and ribosome assembly. This chain is U3 small nucleolar RNA-associated protein 21 (UTP21), found in Saccharomyces cerevisiae (strain ATCC 204508 / S288c) (Baker's yeast).